The sequence spans 335 residues: Methionine import ATP-binding protein MetN (335 aa).

The 240-residue stretch at 2 to 241 folds into the ABC transporter domain; that stretch reads IQFQRLHKSY…PQHPTTRRFV (240 aa). Position 38-45 (38-45) interacts with ATP; it reads GHSGAGKS.

This sequence belongs to the ABC transporter superfamily. Methionine importer (TC 3.A.1.24) family. As to quaternary structure, the complex is composed of two ATP-binding proteins (MetN), two transmembrane proteins (MetI) and a solute-binding protein (MetQ).

Its subcellular location is the cell inner membrane. It carries out the reaction L-methionine(out) + ATP + H2O = L-methionine(in) + ADP + phosphate + H(+). It catalyses the reaction D-methionine(out) + ATP + H2O = D-methionine(in) + ADP + phosphate + H(+). Its function is as follows. Part of the ABC transporter complex MetNIQ involved in methionine import. Responsible for energy coupling to the transport system. This chain is Methionine import ATP-binding protein MetN, found in Xanthomonas campestris pv. campestris (strain 8004).